The primary structure comprises 95 residues: Co-chaperonin GroES (95 aa).

It belongs to the GroES chaperonin family. Heptamer of 7 subunits arranged in a ring. Interacts with the chaperonin GroEL.

It is found in the cytoplasm. In terms of biological role, together with the chaperonin GroEL, plays an essential role in assisting protein folding. The GroEL-GroES system forms a nano-cage that allows encapsulation of the non-native substrate proteins and provides a physical environment optimized to promote and accelerate protein folding. GroES binds to the apical surface of the GroEL ring, thereby capping the opening of the GroEL channel. In Beijerinckia indica subsp. indica (strain ATCC 9039 / DSM 1715 / NCIMB 8712), this protein is Co-chaperonin GroES.